Consider the following 294-residue polypeptide: Cytidine deaminase (294 aa).

CMP/dCMP-type deaminase domains lie at 48-168 and 186-294; these read DEDA…FGPK and LTGD…VLLA. 89–91 contacts substrate; that stretch reads NME. His-102 provides a ligand contact to Zn(2+). The active-site Proton donor is Glu-104. Zn(2+) is bound by residues Cys-129 and Cys-132.

This sequence belongs to the cytidine and deoxycytidylate deaminase family. In terms of assembly, homodimer. Zn(2+) is required as a cofactor.

It catalyses the reaction cytidine + H2O + H(+) = uridine + NH4(+). It carries out the reaction 2'-deoxycytidine + H2O + H(+) = 2'-deoxyuridine + NH4(+). Its function is as follows. This enzyme scavenges exogenous and endogenous cytidine and 2'-deoxycytidine for UMP synthesis. In Escherichia coli O139:H28 (strain E24377A / ETEC), this protein is Cytidine deaminase.